We begin with the raw amino-acid sequence, 213 residues long: Probable nicotinate-nucleotide adenylyltransferase (213 aa).

The protein belongs to the NadD family.

The enzyme catalyses nicotinate beta-D-ribonucleotide + ATP + H(+) = deamido-NAD(+) + diphosphate. It participates in cofactor biosynthesis; NAD(+) biosynthesis; deamido-NAD(+) from nicotinate D-ribonucleotide: step 1/1. Its function is as follows. Catalyzes the reversible adenylation of nicotinate mononucleotide (NaMN) to nicotinic acid adenine dinucleotide (NaAD). This Escherichia coli O139:H28 (strain E24377A / ETEC) protein is Probable nicotinate-nucleotide adenylyltransferase.